A 450-amino-acid chain; its full sequence is MTRKYFGTDGVRGRVGQSPITPDFVMRLGYSAGKALLGRSEMPAGDRPAVLIGKDTRLSGYMLESALEAGFSAAGVEVCLVGPLPTPAVAYLTRALRLQAGIVISASHNPYYDNGIKFFSAQGTKLPDEVERAIEAGIDQPMVCAPPADLGRVRRIEDARGRYIEFCKSTFPNDLDLRGLKIVIDCAHGAAYHIAPSVFHELGADVVSIGVQPNGLNINDAVGATAPKALCEAVLANRADLGIALDGDADRLQMVDAEGNLYDGDQLLYAIVRSRARSAPVKGVAGTLMSNLALEHALAKLNIPFARAAVGDRYVVEMLSEKGWLFGGENSGHILALDRHTTGDGIVAALQVLAALRELGGSLKELLGGLVLYPQKLINVPVMRGFPWKEHPAITSALADTEVSLQGRGRVLLRASGTEPLLRVMVEGEDAVEVTYAAEKLAAVVRESAQ.

Ser-107 serves as the catalytic Phosphoserine intermediate. Positions 107, 246, 248, and 250 each coordinate Mg(2+). Position 107 is a phosphoserine (Ser-107).

The protein belongs to the phosphohexose mutase family. Mg(2+) is required as a cofactor. Activated by phosphorylation.

It carries out the reaction alpha-D-glucosamine 1-phosphate = D-glucosamine 6-phosphate. Catalyzes the conversion of glucosamine-6-phosphate to glucosamine-1-phosphate. This chain is Phosphoglucosamine mutase, found in Dechloromonas aromatica (strain RCB).